We begin with the raw amino-acid sequence, 464 residues long: Meiotic plaque component protein 54 (464 aa).

A disordered region spans residues 71 to 102 (SISTTITPNKSSLKSPRGKRASKNSFDNETKL). 3 coiled-coil regions span residues 99–119 (ETKL…VNRC), 156–193 (KAEC…DHLL), and 231–365 (SINS…LQTQ).

In terms of assembly, interacts directly with SPO21/MPC70, NUD1, SPO74 and SPC42. Probable component of a spindle pole body (SPB) complex composed of ADY3, SSP1, DON1, MPC54, SPO21/MPC70, NUD1 and CNM67.

It is found in the prospore membrane. The protein resides in the cytoplasm. Its subcellular location is the cytoskeleton. The protein localises to the microtubule organizing center. It localises to the spindle pole body. It is found in the spindle pole. Involved in the pathway that organizes the shaping and sizing of the prospore membrane (PSM) during sporulation. The polypeptide is Meiotic plaque component protein 54 (MPC54) (Saccharomyces cerevisiae (strain ATCC 204508 / S288c) (Baker's yeast)).